A 316-amino-acid polypeptide reads, in one-letter code: Transaldolase 2 (316 aa).

Lys131 acts as the Schiff-base intermediate with substrate in catalysis.

This sequence belongs to the transaldolase family. Type 1 subfamily. Homodimer.

The protein localises to the cytoplasm. It catalyses the reaction D-sedoheptulose 7-phosphate + D-glyceraldehyde 3-phosphate = D-erythrose 4-phosphate + beta-D-fructose 6-phosphate. It functions in the pathway carbohydrate degradation; pentose phosphate pathway; D-glyceraldehyde 3-phosphate and beta-D-fructose 6-phosphate from D-ribose 5-phosphate and D-xylulose 5-phosphate (non-oxidative stage): step 2/3. In terms of biological role, transaldolase is important for the balance of metabolites in the pentose-phosphate pathway. The chain is Transaldolase 2 from Salmonella choleraesuis (strain SC-B67).